The primary structure comprises 817 residues: MPNSNVRIPPTVPSKIIDVVDQALRARLLGGSTFNSGFDSLDSVLNLQFRLHYHVIGSNGPAKPVCDVLLKESQNLEKNMSMMEELNDYPEITKLVEKILFNCLGILFFHRGQFQESQRCLLHSLKIHNNTASQKTALMEQYDRYLIVENLYYRGLVSQDINIMQNVFYKELLAHVDTIPPESNGLLFEYISLIVAKLRFNQIQDLAENFKTTVENPFILFLYMIKKFQSPLKKHIDNDDLYLKFGQNVLLKAKFPTASETNDEALEHFNVFLQYYFKFTHIKKIKVNPSWYNFIISSMEKTFQSIEVSKTAMFLFQNLSDNSNDEIKKKTFKRESILNFVNFVKYNDKYYQLHDNSHRDIISFIDAYSFILQNSSKTDSIENVFDYDNTVSTFATSLNSFYKEYNLPLMSQSESLDWLENSTRCVYPGNISKVLTNAWSTLYEIRKYQLDFLVSNNLTSYLCNAMMLSTKEKDNADVEEQEEGEEEKALRELQFKYSYTLAQQRHIETAIKTLESLILSKNPNYYKAWHLLALCRSVQEDKEMSYKIVCSVLEAMNESLQNNTLLLNDRWQFIHLKLTQLALIEEIFGTLEALETLPEVFELYATLFPDSQPELNSMGPKYSQTKEYLLQMVWIFAANMYMRTKDNDEDAKAAIKEASNVESKFKNLNCNIANGYLSIIKDEPGVALKEFETVLYYDENNLDALVGFAELIFPEELGVEETNLERYYTLSLDKKPGKRAKLTFVNDTDRSAAYARLKFLLECAILESIEAYYSPEVWWYLSLIYEKYQDDEYKNSLLKCIKYQELNPIRSLRYCNY.

This sequence belongs to the YPP1 family. As to quaternary structure, interacts with ribosomes.

Its subcellular location is the cytoplasmic granule. The protein resides in the cell membrane. In terms of biological role, involved in endocytosis. The chain is Cargo-transport protein YPP1 (YPP1) from Saccharomyces cerevisiae (strain ATCC 204508 / S288c) (Baker's yeast).